Consider the following 327-residue polypeptide: Protein CONSERVED IN THE GREEN LINEAGE AND DIATOMS 27, chloroplastic (327 aa).

The N-terminal 59 residues, 1 to 59 (MLRLIVNYPLIPKISHRVCSNSSSKLGSYYDSSSIIKYGGISDVVGKKQELFLSVSVKA), are a transit peptide targeting the chloroplast. Positions 66-88 (NGGGSMSFSGQSWDPSSEIEVPS) are disordered. The next 3 membrane-spanning stretches (helical) occupy residues 119–139 (LGGL…AASF), 148–168 (FILA…LRIY), and 225–245 (LIGT…ATPV).

As to expression, mostly expressed in seeds, leaves and flowers, and, to a lower extent, in roots.

The protein resides in the membrane. It localises to the plastid. The protein localises to the chloroplast. Required for growth in low iron conditions. The polypeptide is Protein CONSERVED IN THE GREEN LINEAGE AND DIATOMS 27, chloroplastic (Arabidopsis thaliana (Mouse-ear cress)).